Consider the following 298-residue polypeptide: Ectoine dioxygenase (298 aa).

Residues 1–18 (MLQQAIDRDPVDRIDRYP) show a composition bias toward basic and acidic residues. Residues 1–26 (MLQQAIDRDPVDRIDRYPTRTAEPAP) are disordered. Position 133 (Q133) interacts with L-ectoine. Residues H150, D152, and H251 each coordinate Fe cation.

Belongs to the PhyH family. EctD subfamily. Homodimer. Fe(2+) serves as cofactor.

The catalysed reaction is L-ectoine + 2-oxoglutarate + O2 = 5-hydroxyectoine + succinate + CO2. Functionally, involved in the biosynthesis of 5-hydroxyectoine, called compatible solute, which helps organisms to survive extreme osmotic stress by acting as a highly soluble organic osmolyte. Catalyzes the 2-oxoglutarate-dependent selective hydroxylation of L-ectoine to yield (4S,5S)-5-hydroxyectoine. The sequence is that of Ectoine dioxygenase from Nocardia farcinica (strain IFM 10152).